We begin with the raw amino-acid sequence, 661 residues long: Ubiquitin carboxyl-terminal hydrolase 25 (661 aa).

The region spanning 24–335 is the USP domain; it reads LGLRNLGNTC…KAYILFFSRS (312 aa). Cys33 functions as the Nucleophile in the catalytic mechanism. His294 acts as the Proton acceptor in catalysis. Disordered stretches follow at residues 387–406 and 449–558; these read GNLASSKPHKFIRPKPRAEQ and FHQD…LCSS. The span at 449 to 461 shows a compositional bias: basic and acidic residues; sequence FHQDENIAPKANK. 2 stretches are compositionally biased toward polar residues: residues 462 to 475 and 545 to 558; these read ENSVSVLPTKVNSG and NGVSTTQSKGLCSS.

It belongs to the peptidase C19 family.

The enzyme catalyses Thiol-dependent hydrolysis of ester, thioester, amide, peptide and isopeptide bonds formed by the C-terminal Gly of ubiquitin (a 76-residue protein attached to proteins as an intracellular targeting signal).. Functionally, recognizes and hydrolyzes the peptide bond at the C-terminal Gly of ubiquitin. Involved in the processing of poly-ubiquitin precursors as well as that of ubiquitinated proteins. This chain is Ubiquitin carboxyl-terminal hydrolase 25 (UBP25), found in Arabidopsis thaliana (Mouse-ear cress).